A 353-amino-acid polypeptide reads, in one-letter code: Quinolinate synthase (353 aa).

Iminosuccinate-binding residues include His49 and Ser70. Cys115 provides a ligand contact to [4Fe-4S] cluster. Residues 141-143 (YAN) and Ser158 contribute to the iminosuccinate site. Cys202 provides a ligand contact to [4Fe-4S] cluster. Residues 228 to 230 (HPE) and Thr245 contribute to the iminosuccinate site. [4Fe-4S] cluster is bound at residue Cys299.

This sequence belongs to the quinolinate synthase family. Type 1 subfamily. Requires [4Fe-4S] cluster as cofactor.

It localises to the cytoplasm. The catalysed reaction is iminosuccinate + dihydroxyacetone phosphate = quinolinate + phosphate + 2 H2O + H(+). It functions in the pathway cofactor biosynthesis; NAD(+) biosynthesis; quinolinate from iminoaspartate: step 1/1. Functionally, catalyzes the condensation of iminoaspartate with dihydroxyacetone phosphate to form quinolinate. The sequence is that of Quinolinate synthase from Marinobacter nauticus (strain ATCC 700491 / DSM 11845 / VT8) (Marinobacter aquaeolei).